The chain runs to 100 residues: NADH-quinone oxidoreductase subunit K (100 aa).

3 consecutive transmembrane segments (helical) span residues 4 to 24 (LQHGLILAAILFILGLTGLVI), 28 to 48 (LLFMLIGLEIMINASALAFVV), and 60 to 80 (VMYILAISLAAAEASIGLALL).

The protein belongs to the complex I subunit 4L family. NDH-1 is composed of 13 different subunits. Subunits NuoA, H, J, K, L, M, N constitute the membrane sector of the complex.

The protein localises to the cell inner membrane. It carries out the reaction a quinone + NADH + 5 H(+)(in) = a quinol + NAD(+) + 4 H(+)(out). In terms of biological role, NDH-1 shuttles electrons from NADH, via FMN and iron-sulfur (Fe-S) centers, to quinones in the respiratory chain. The immediate electron acceptor for the enzyme in this species is believed to be ubiquinone. Couples the redox reaction to proton translocation (for every two electrons transferred, four hydrogen ions are translocated across the cytoplasmic membrane), and thus conserves the redox energy in a proton gradient. This Shigella sonnei (strain Ss046) protein is NADH-quinone oxidoreductase subunit K.